We begin with the raw amino-acid sequence, 247 residues long: Mast cell protease 2 (247 aa).

Positions Met-1–Ala-19 are cleaved as a signal peptide. A propeptide spans Gly-20–Glu-21 (activation peptide). Residues Ile-22–Arg-245 form the Peptidase S1 domain. Cys-51 and Cys-67 are disulfide-bonded. His-66 serves as the catalytic Charge relay system. N-linked (GlcNAc...) asparagine glycosylation is present at Asn-80. The Charge relay system role is filled by Asp-110. 2 cysteine pairs are disulfide-bonded: Cys-144–Cys-209 and Cys-175–Cys-188. The active-site Charge relay system is Ser-203.

Belongs to the peptidase S1 family. Granzyme subfamily.

In Meriones unguiculatus (Mongolian jird), this protein is Mast cell protease 2.